Reading from the N-terminus, the 236-residue chain is Ribose-5-phosphate isomerase A (236 aa).

Residues 31-34, 84-87, and 97-100 contribute to the substrate site; these read TGST, DGAD, and KGGG. Glu106 serves as the catalytic Proton acceptor. Lys124 is a binding site for substrate.

The protein belongs to the ribose 5-phosphate isomerase family. Homodimer.

It catalyses the reaction aldehydo-D-ribose 5-phosphate = D-ribulose 5-phosphate. Its pathway is carbohydrate degradation; pentose phosphate pathway; D-ribose 5-phosphate from D-ribulose 5-phosphate (non-oxidative stage): step 1/1. Functionally, catalyzes the reversible conversion of ribose-5-phosphate to ribulose 5-phosphate. This chain is Ribose-5-phosphate isomerase A, found in Polynucleobacter asymbioticus (strain DSM 18221 / CIP 109841 / QLW-P1DMWA-1) (Polynucleobacter necessarius subsp. asymbioticus).